The following is a 328-amino-acid chain: L-asparaginase (328 aa).

The Asparaginase/glutaminase domain occupies 1 to 320 (MKLLVLGTGG…EEIRKIMERN (320 aa)). Catalysis depends on threonine 11, which acts as the Nucleophile; O-isoaspartyl threonine intermediate. L-aspartate contacts are provided by threonine 11, aspartate 53, serine 54, threonine 85, and aspartate 86. Catalysis depends on charge relay system residues threonine 85, aspartate 86, lysine 156, and tyrosine 274.

The protein belongs to the asparaginase 1 family. Homodimer.

It carries out the reaction L-asparagine + H2O = L-aspartate + NH4(+). Chohan et al. found that divalent metal ions and EDTA do not have any significant effect on enzyme activity, indicating that activity is independent of metal ions. In another study, Hong et al. showed that activity is enhanced by Mg(2+), significantly inhibited by Co(2+) and Ni(2+), and moderately inhibited by Ca(2+), Cu(2+) and EDTA. Unfolding studies suggest that urea cannot induce complete unfolding and inactivation of the enzyme even at a concentration 8 M. However, in the presence of 4 M guanidine hydrochloride, the enzyme structure is unfolded with complete loss of enzyme activity. In terms of biological role, catalyzes the hydrolysis of L-asparagine into L-aspartate and ammonia. Also displays D-asparaginase activity, which is about 50% of the L-asparaginase activity. Does not exhibit glutaminase activity. This Thermococcus kodakarensis (strain ATCC BAA-918 / JCM 12380 / KOD1) (Pyrococcus kodakaraensis (strain KOD1)) protein is L-asparaginase.